Consider the following 347-residue polypeptide: UDP-3-O-acylglucosamine N-acyltransferase (347 aa).

Residue histidine 241 is the Proton acceptor of the active site.

It belongs to the transferase hexapeptide repeat family. LpxD subfamily. As to quaternary structure, homotrimer.

The catalysed reaction is a UDP-3-O-[(3R)-3-hydroxyacyl]-alpha-D-glucosamine + a (3R)-hydroxyacyl-[ACP] = a UDP-2-N,3-O-bis[(3R)-3-hydroxyacyl]-alpha-D-glucosamine + holo-[ACP] + H(+). It participates in bacterial outer membrane biogenesis; LPS lipid A biosynthesis. Its function is as follows. Catalyzes the N-acylation of UDP-3-O-acylglucosamine using 3-hydroxyacyl-ACP as the acyl donor. Is involved in the biosynthesis of lipid A, a phosphorylated glycolipid that anchors the lipopolysaccharide to the outer membrane of the cell. This is UDP-3-O-acylglucosamine N-acyltransferase from Neisseria meningitidis serogroup A / serotype 4A (strain DSM 15465 / Z2491).